The chain runs to 91 residues: Cell division topological specificity factor (91 aa).

It belongs to the MinE family.

Prevents the cell division inhibition by proteins MinC and MinD at internal division sites while permitting inhibition at polar sites. This ensures cell division at the proper site by restricting the formation of a division septum at the midpoint of the long axis of the cell. The chain is Cell division topological specificity factor from Lachnospira eligens (strain ATCC 27750 / DSM 3376 / VPI C15-48 / C15-B4) (Eubacterium eligens).